Here is a 1483-residue protein sequence, read N- to C-terminus: Rho GTPase-activating protein 23 (1483 aa).

The tract at residues P15–R34 is disordered. Residues H71–D155 form the PDZ domain. Disordered stretches follow at residues I212–R276 and A300–G345. The span at S316–T325 shows a compositional bias: basic and acidic residues. A compositionally biased stretch (polar residues) spans C331–G342. Phosphoserine occurs at positions 361 and 372. Positions P385–Q407 are disordered. Position 421 is a phosphoserine (S421). 2 disordered regions span residues S448–D485 and N508–R527. Phosphoserine is present on residues S515, S579, S607, and S619. T652 carries the post-translational modification Phosphothreonine. S655, S658, and S673 each carry phosphoserine. In terms of domain architecture, PH spans D684–R804. Residues K827–G848 form a disordered region. K850 is covalently cross-linked (Glycyl lysine isopeptide (Lys-Gly) (interchain with G-Cter in SUMO2)). 4 disordered regions span residues R860–P879, F1093–P1150, K1171–P1361, and E1419–L1469. The region spanning I901–F1093 is the Rho-GAP domain. Over residues K1099–P1110 the composition is skewed to basic and acidic residues. Composition is skewed to polar residues over residues G1133–S1144 and S1236–D1248. Residues G1338–P1351 show a composition bias toward low complexity. Residues S1440–S1457 show a composition bias toward polar residues.

Functionally, GTPase activator for the Rho-type GTPases by converting them to an inactive GDP-bound state. This is Rho GTPase-activating protein 23 (Arhgap23) from Mus musculus (Mouse).